The following is a 547-amino-acid chain: Fimbria adhesin EcpD (547 aa).

The signal sequence occupies residues 1–23 (MRVNLLITMIIFALIWPVTALRA).

It belongs to the EcpD/MatE family. As to quaternary structure, forms polymers. Interacts with EcpA.

It localises to the fimbrium. In terms of biological role, part of the ecpRABCDE operon, which encodes the E.coli common pilus (ECP). ECP is found in both commensal and pathogenic strains and plays a dual role in early-stage biofilm development and host cell recognition. Tip pilus adhesin, which is required for assembly of EcpA into fibers. This chain is Fimbria adhesin EcpD (ecpD), found in Escherichia coli (strain K12).